A 136-amino-acid chain; its full sequence is Small ribosomal subunit protein uS19 (136 aa).

Positions 114–136 (RSRVSHGSAGVGATRSSKFVPLK) are disordered.

The protein belongs to the universal ribosomal protein uS19 family.

Functionally, protein S19 forms a complex with S13 that binds strongly to the 16S ribosomal RNA. In Methanosarcina barkeri (strain Fusaro / DSM 804), this protein is Small ribosomal subunit protein uS19.